The chain runs to 101 residues: Ubiquitin-like protein SMT3 (101 aa).

S2 bears the N-acetylserine mark. Residues S2 and S4 each carry the phosphoserine modification. The Ubiquitin-like domain occupies 22–98 (THINLKVSDG…IEAHREQIGG (77 aa)). A Glycyl lysine isopeptide (Gly-Lys) (interchain with K-? in acceptor proteins) cross-link involves residue G98. A propeptide spanning residues 99–101 (ATY) is cleaved from the precursor.

The protein belongs to the ubiquitin family. SUMO subfamily. As to quaternary structure, activated by a E1 ligase composed of AOS1 and UBA2.

In terms of biological role, not known; suppressor of MIF2 mutations. The protein is Ubiquitin-like protein SMT3 (SMT3) of Saccharomyces cerevisiae (strain ATCC 204508 / S288c) (Baker's yeast).